The following is a 481-amino-acid chain: Phosphoenolpyruvate phosphatase (481 aa).

Residues 1–36 form the signal peptide; that stretch reads MPIYTSRSCFYLLLFHIILLCSVDKTLCRQTSSFVR. N-linked (GlcNAc...) asparagine glycosylation is present at Asn109. Fe cation is bound by residues Asp168, Asp195, and Tyr198. Asp195 is a Zn(2+) binding site. Residue Asn206 is glycosylated (N-linked (GlcNAc...) asparagine). Zn(2+)-binding residues include Asn232 and His317. Asn232 is a binding site for substrate. The active-site Proton donor is the His327. His354 is a binding site for Zn(2+). Position 354–356 (354–356) interacts with substrate; the sequence is HVH. Fe cation is bound at residue His356. 2 N-linked (GlcNAc...) asparagine glycosylation sites follow: Asn370 and Asn427.

Belongs to the metallophosphoesterase superfamily. Purple acid phosphatase family.

Its subcellular location is the vacuole lumen. It carries out the reaction phosphoenolpyruvate + H2O = pyruvate + phosphate. Its function is as follows. Phosphoenolpyruvate phosphatase that probably operates in the vacuole to release phosphate from phosphoenolpyruvate (PEP) under phosphorus starvation. This Allium cepa (Onion) protein is Phosphoenolpyruvate phosphatase (ACPEPP).